The primary structure comprises 663 residues: Sodium/potassium/calcium exchanger 1 (663 aa).

Topologically, residues 32 to 128 (SPSAIPALLT…DLFSVEERRQ (97 aa)) are extracellular. N-linked (GlcNAc...) asparagine glycosylation is found at asparagine 59, asparagine 66, and asparagine 100. Residues 129–149 (GWVVLHIFGMMYVFVALAIVC) traverse the membrane as a helical segment. Over 150–173 (DEYFVPALGVITEKLQISEDVAGA) the chain is Cytoplasmic. An Alpha-1 repeat occupies 170–210 (VAGATFMAAGGSAPELFTSLIGVFISHSNVGIGTIVGSAVF). The helical transmembrane segment at 174–194 (TFMAAGGSAPELFTSLIGVFI) threads the bilayer. Residues 195-200 (SHSNVG) lie on the Extracellular side of the membrane. Residues 201-221 (IGTIVGSAVFNILFVIGTCAL) form a helical membrane-spanning segment. Residues 222–228 (FSREILH) are Cytoplasmic-facing. Residues 229–253 (LTWWPLFRDISFYIVDLLMLILFFL) form a helical membrane-spanning segment. Residues 254–259 (DSVIDW) are Extracellular-facing. The chain crosses the membrane as a helical span at residues 260–276 (WESLLLLTAYATYVFTM). Over 277–471 (KHNVSLEQWV…SLEWPETRKK (195 aa)) the chain is Cytoplasmic. 2 disordered regions span residues 308-343 (KSSV…SLHN) and 384-465 (LTGQ…SLEW). The span at 316 to 325 (DGTKPADGKK) shows a compositional bias: basic and acidic residues. Polar residues-rich tracts occupy residues 327 to 343 (QPTT…SLHN) and 399 to 412 (ASQN…ASDS). Serine 337 bears the Phosphoserine mark. Over residues 413–423 (EPSKDKQKEDT) the composition is skewed to basic and acidic residues. Over residues 434-461 (DNSEDSSSDSEDDSDDDSTDDEENDEPL) the composition is skewed to acidic residues. The chain crosses the membrane as a helical span at residues 472 to 492 (QAIYLFLFPIVFPLWSTIPDV). The Extracellular segment spans residues 493-499 (RNPDSKK). Residues 500–520 (FFVITFFGSIIWIAAFSYLMV) traverse the membrane as a helical segment. Over 521–535 (WWAHQVGETIGISEE) the chain is Cytoplasmic. A helical transmembrane segment spans residues 536 to 556 (IMGLTILAAGTSIPDLITSVI). The stretch at 543–574 (AAGTSIPDLITSVIVARKGLGDMAVSSSVGSN) is one Alpha-2 repeat. The Extracellular segment spans residues 557 to 574 (VARKGLGDMAVSSSVGSN). The chain crosses the membrane as a helical span at residues 575-595 (IFDITVGLPVPWFLYSVFNGF). At 596-604 (SPVAVSSNG) the chain is on the cytoplasmic side. Residues 605–625 (LFCAIVLLFLMLLFVIISIAL) traverse the membrane as a helical segment. The Extracellular segment spans residues 626 to 632 (CKWKMNK). The chain crosses the membrane as a helical span at residues 633–653 (ILGVTMFALYFVFLIISVMLE). The Cytoplasmic portion of the chain corresponds to 654–663 (DRIISCPVSV).

The protein belongs to the Ca(2+):cation antiporter (CaCA) (TC 2.A.19) family. SLC24A subfamily. Post-translationally, the uncleaved signal sequence is required for efficient membrane targeting and proper membrane integration and topology. In terms of tissue distribution, retinal rods. Localizes to the inner segment of rod photoreceptors.

The protein resides in the cell membrane. The enzyme catalyses Ca(2+)(out) + K(+)(out) + 4 Na(+)(in) = Ca(2+)(in) + K(+)(in) + 4 Na(+)(out). Functionally, calcium, potassium:sodium antiporter that transports 1 Ca(2+) and 1 K(+) in exchange for 4 Na(+). Critical component of the visual transduction cascade, controlling the calcium concentration of outer segments during light and darkness. Light causes a rapid lowering of cytosolic free calcium in the outer segment of both retinal rod and cone photoreceptors and the light-induced lowering of calcium is caused by extrusion via this protein which plays a key role in the process of light adaptation. In Gallus gallus (Chicken), this protein is Sodium/potassium/calcium exchanger 1 (SLC24A1).